Reading from the N-terminus, the 425-residue chain is UDP-N-acetylglucosamine 1-carboxyvinyltransferase (425 aa).

22–23 (KN) contacts phosphoenolpyruvate. Arg91 lines the UDP-N-acetyl-alpha-D-glucosamine pocket. The active-site Proton donor is the Cys115. Cys115 carries the post-translational modification 2-(S-cysteinyl)pyruvic acid O-phosphothioketal. Residues 120-124 (RPVDL), Asp309, and Ile331 each bind UDP-N-acetyl-alpha-D-glucosamine.

Belongs to the EPSP synthase family. MurA subfamily.

It localises to the cytoplasm. The enzyme catalyses phosphoenolpyruvate + UDP-N-acetyl-alpha-D-glucosamine = UDP-N-acetyl-3-O-(1-carboxyvinyl)-alpha-D-glucosamine + phosphate. The protein operates within cell wall biogenesis; peptidoglycan biosynthesis. Its function is as follows. Cell wall formation. Adds enolpyruvyl to UDP-N-acetylglucosamine. In Akkermansia muciniphila (strain ATCC BAA-835 / DSM 22959 / JCM 33894 / BCRC 81048 / CCUG 64013 / CIP 107961 / Muc), this protein is UDP-N-acetylglucosamine 1-carboxyvinyltransferase.